A 79-amino-acid polypeptide reads, in one-letter code: Acyl carrier protein (79 aa).

The 76-residue stretch at 2-77 (ENIEQRVKKI…QAIDYVTAHL (76 aa)) folds into the Carrier domain. O-(pantetheine 4'-phosphoryl)serine is present on Ser-37.

It belongs to the acyl carrier protein (ACP) family. In terms of processing, 4'-phosphopantetheine is transferred from CoA to a specific serine of apo-ACP by AcpS. This modification is essential for activity because fatty acids are bound in thioester linkage to the sulfhydryl of the prosthetic group.

Its subcellular location is the cytoplasm. It participates in lipid metabolism; fatty acid biosynthesis. Functionally, carrier of the growing fatty acid chain in fatty acid biosynthesis. The polypeptide is Acyl carrier protein (Aromatoleum aromaticum (strain DSM 19018 / LMG 30748 / EbN1) (Azoarcus sp. (strain EbN1))).